The following is a 209-amino-acid chain: Urease accessory protein UreG (209 aa).

16-23 (GPVGSGKT) lines the GTP pocket.

This sequence belongs to the SIMIBI class G3E GTPase family. UreG subfamily. In terms of assembly, homodimer. UreD, UreF and UreG form a complex that acts as a GTP-hydrolysis-dependent molecular chaperone, activating the urease apoprotein by helping to assemble the nickel containing metallocenter of UreC. The UreE protein probably delivers the nickel.

It is found in the cytoplasm. In terms of biological role, facilitates the functional incorporation of the urease nickel metallocenter. This process requires GTP hydrolysis, probably effectuated by UreG. This chain is Urease accessory protein UreG, found in Blochmanniella floridana.